A 345-amino-acid chain; its full sequence is Fe(3+) ions import ATP-binding protein FbpC (345 aa).

Positions L4–L236 constitute an ABC transporter domain. ATP is bound at residue G36–T43.

It belongs to the ABC transporter superfamily. Fe(3+) ion importer (TC 3.A.1.10) family. As to quaternary structure, the complex is composed of two ATP-binding proteins (FbpC), two transmembrane proteins (FbpB) and a solute-binding protein (FbpA).

Its subcellular location is the cell inner membrane. The enzyme catalyses Fe(3+)(out) + ATP + H2O = Fe(3+)(in) + ADP + phosphate + H(+). Functionally, part of the ABC transporter complex FbpABC involved in Fe(3+) ions import. Responsible for energy coupling to the transport system. This Serratia marcescens protein is Fe(3+) ions import ATP-binding protein FbpC.